The chain runs to 147 residues: Large ribosomal subunit protein uL15 (147 aa).

Residues 1-58 (MRLHDLKPAEGSTKKKKRVGRGIGSGHGKTSGRGHKGQNARSGGGVRPGFEGGQMPLT) form a disordered region. Residues 42–52 (SGGGVRPGFEG) are compositionally biased toward gly residues.

Belongs to the universal ribosomal protein uL15 family. In terms of assembly, part of the 50S ribosomal subunit.

Binds to the 23S rRNA. The protein is Large ribosomal subunit protein uL15 of Caldanaerobacter subterraneus subsp. tengcongensis (strain DSM 15242 / JCM 11007 / NBRC 100824 / MB4) (Thermoanaerobacter tengcongensis).